Here is a 135-residue protein sequence, read N- to C-terminus: MRLSFIIFAISLLAGGSGAAEALHPASDVLTLRGTNQGASTGKRSLRYDNNAERAGEEDDEERAFPGAEELSRLANLAHTSKADSLGTSLKNFFKQLDKANVNPSNIHKYGFSGEEFDQLRKRFGTWYRHYKDIE.

A signal peptide spans 1-19 (MRLSFIIFAISLLAGGSGA). Positions 34–43 (GTNQGASTGK) are enriched in polar residues. Positions 34-64 (GTNQGASTGKRSLRYDNNAERAGEEDDEERA) are disordered. Positions 44-63 (RSLRYDNNAERAGEEDDEER) match the RxLR-dEER motif. Over residues 46 to 55 (LRYDNNAERA) the composition is skewed to basic and acidic residues.

It belongs to the RxLR effector family.

Its subcellular location is the secreted. It localises to the host nucleus. The protein localises to the host cytoplasm. Its function is as follows. Secreted effector that acts as an elicitor of hypersensitive response (HR) specifically on plants carrying defense protein R10. Enhances P.infestans colonization of Nicotiana benthamiana leaves. The protein is RxLR effector protein Avr10 of Phytophthora infestans (strain T30-4) (Potato late blight agent).